A 544-amino-acid chain; its full sequence is uncharacterized protein (544 aa).

14 consecutive transmembrane segments (helical) span residues 31–51, 52–72, 84–104, 116–136, 162–182, 191–211, 230–250, 257–277, 318–338, 356–376, 383–403, 407–427, 450–470, and 501–521; these read ILVF…AALA, GSVL…IGLL, LPWM…QWLI, WGLF…YTTV, FAFS…IAAG, FGEL…WSAL, LAPL…AKSF, GFDY…GFGF, FLFV…TASI, TIAL…QALA, VIYF…WLVQ, VALL…AYLI, FFYA…LFLV, and FAVA…AIFY.

The protein belongs to the sodium:galactoside symporter (TC 2.A.2) family.

It localises to the cell membrane. This is an uncharacterized protein from Synechocystis sp. (strain ATCC 27184 / PCC 6803 / Kazusa).